The following is a 577-amino-acid chain: Moesin (577 aa).

Positions 2–295 (PKTINVRVTT…GNHELYMRRR (294 aa)) constitute an FERM domain. Ser74 carries the post-translational modification Phosphoserine. Position 79 is an N6-acetyllysine (Lys79). An N6-succinyllysine modification is found at Lys83. Residues 115 to 120 (IYCPPE) carry the [IL]-x-C-x-x-[DE] motif motif. A Phosphotyrosine modification is found at Tyr116. Cys117 is modified (S-nitrosocysteine). Residues Lys139 and Lys165 each carry the N6-acetyllysine modification. The span at 376 to 414 (EQERKRAQSEAEKLAKERQEAEEAKEALLKASRDQKKTQ) shows a compositional bias: basic and acidic residues. Disordered regions lie at residues 376 to 415 (EQER…KTQE) and 434 to 518 (ARQK…NERV). Ser407 carries the phosphoserine modification. Residues 476-487 (AENDQDEQDENG) show a composition bias toward acidic residues. Positions 492–518 (ADLRADAMAKDRSEEERTTEAEKNERV) are enriched in basic and acidic residues. Ser527 bears the Phosphoserine mark. Thr558 carries the post-translational modification Phosphothreonine; by ROCK2 and STK10.

In terms of assembly, binds NHERF1. In resting T-cells, part of a PAG1-NHERF1-MSN complex which is disrupted upon TCR activation. Interacts with PPP1R16B. Interacts with PDZD8. Interacts with SELPLG and SYK; mediates the activation of SYK by SELPLG. Interacts with PDPN (via cytoplasmic domain); activates RHOA and promotes epithelial-mesenchymal transition. Interacts with SPN/CD43 cytoplasmic tail, CD44 and ICAM2. Post-translationally, phosphorylation on Thr-558 is crucial for the formation of microvilli-like structures. Phosphorylation by ROCK2 suppresses the head-to-tail association of the N-terminal and C-terminal halves resulting in an opened conformation which is capable of actin and membrane-binding. Phosphorylation on Thr-558 by STK10 negatively regulates lymphocyte migration and polarization. S-nitrosylation of Cys-117 is induced by interferon-gamma and oxidatively-modified low-densitity lipoprotein (LDL(ox)) implicating the iNOS-S100A8/9 transnitrosylase complex.

Its subcellular location is the cell membrane. It is found in the cytoplasm. It localises to the cytoskeleton. The protein localises to the apical cell membrane. The protein resides in the cell projection. Its subcellular location is the microvillus membrane. It is found in the microvillus. With respect to regulation, a head-to-tail association, of the N-terminal and C-terminal halves results in a closed conformation (inactive form) which is incapable of actin or membrane-binding. Probably involved in connections of major cytoskeletal structures to the plasma membrane. Plays a role in regulating the proliferation, migration, and adhesion of human lymphoid cells and participates in immunologic synapse formation. The protein is Moesin of Sus scrofa (Pig).